The sequence spans 304 residues: Homoserine dehydrogenase (304 aa).

Positions 8, 10, 11, 38, 39, and 73 each coordinate NADP(+). Tyr8 is a binding site for NADPH. Residues Val11 and Arg38 each coordinate NADPH. Val11 is an NAD(+) binding site. Positions 73, 74, 100, and 102 each coordinate NADPH. Ser73 provides a ligand contact to NAD(+). Residues Thr100 and Lys102 each contribute to the NADP(+) site. Na(+) is bound by residues Val129 and Thr133. NADP(+) is bound by residues Gly182 and Glu185. 2 residues coordinate L-homoserine: Glu185 and Asp196. The Proton donor role is filled by Lys200. Gly284 is a binding site for NADP(+). Gly284 is an NADPH binding site. Gly284 provides a ligand contact to NAD(+).

This sequence belongs to the homoserine dehydrogenase family. In terms of assembly, homodimer. A metal cation is required as a cofactor. Post-translationally, the enzyme is activated by reductive cleavage of the interchain disulfide bond between the two subunits.

The catalysed reaction is L-homoserine + NADP(+) = L-aspartate 4-semialdehyde + NADPH + H(+). The enzyme catalyses L-homoserine + NAD(+) = L-aspartate 4-semialdehyde + NADH + H(+). It participates in amino-acid biosynthesis; L-methionine biosynthesis via de novo pathway; L-homoserine from L-aspartate: step 3/3. Its pathway is amino-acid biosynthesis; L-threonine biosynthesis; L-threonine from L-aspartate: step 3/5. With respect to regulation, inhibited by cysteine. Its function is as follows. Catalyzes the conversion of L-aspartate-beta-semialdehyde (L-Asa) to L-homoserine (L-Hse), the third step in the biosynthesis of threonine and methionine from aspartate. In Sulfurisphaera tokodaii (strain DSM 16993 / JCM 10545 / NBRC 100140 / 7) (Sulfolobus tokodaii), this protein is Homoserine dehydrogenase.